The primary structure comprises 95 residues: uncharacterized protein (95 aa).

The protein belongs to the inositol monophosphatase superfamily.

This is an uncharacterized protein from Rhizobium leguminosarum bv. phaseoli.